The chain runs to 374 residues: Phosphoserine aminotransferase (374 aa).

Residue arginine 46 coordinates L-glutamate. Residues 80 to 81, phenylalanine 104, threonine 150, aspartate 174, and glutamine 197 contribute to the pyridoxal 5'-phosphate site; that span reads AT. Residue lysine 198 is modified to N6-(pyridoxal phosphate)lysine. A pyridoxal 5'-phosphate-binding site is contributed by 249–250; it reads NT.

Belongs to the class-V pyridoxal-phosphate-dependent aminotransferase family. SerC subfamily. In terms of assembly, homodimer. Pyridoxal 5'-phosphate serves as cofactor.

The protein localises to the cytoplasm. It catalyses the reaction O-phospho-L-serine + 2-oxoglutarate = 3-phosphooxypyruvate + L-glutamate. It carries out the reaction 4-(phosphooxy)-L-threonine + 2-oxoglutarate = (R)-3-hydroxy-2-oxo-4-phosphooxybutanoate + L-glutamate. It functions in the pathway amino-acid biosynthesis; L-serine biosynthesis; L-serine from 3-phospho-D-glycerate: step 2/3. It participates in cofactor biosynthesis; pyridoxine 5'-phosphate biosynthesis; pyridoxine 5'-phosphate from D-erythrose 4-phosphate: step 3/5. Functionally, catalyzes the reversible conversion of 3-phosphohydroxypyruvate to phosphoserine and of 3-hydroxy-2-oxo-4-phosphonooxybutanoate to phosphohydroxythreonine. The sequence is that of Phosphoserine aminotransferase from Nocardioides sp. (strain ATCC BAA-499 / JS614).